Reading from the N-terminus, the 238-residue chain is Aspartate/glutamate leucyltransferase (238 aa).

It belongs to the R-transferase family. Bpt subfamily.

It is found in the cytoplasm. It carries out the reaction N-terminal L-glutamyl-[protein] + L-leucyl-tRNA(Leu) = N-terminal L-leucyl-L-glutamyl-[protein] + tRNA(Leu) + H(+). The catalysed reaction is N-terminal L-aspartyl-[protein] + L-leucyl-tRNA(Leu) = N-terminal L-leucyl-L-aspartyl-[protein] + tRNA(Leu) + H(+). Its function is as follows. Functions in the N-end rule pathway of protein degradation where it conjugates Leu from its aminoacyl-tRNA to the N-termini of proteins containing an N-terminal aspartate or glutamate. In Aeromonas salmonicida (strain A449), this protein is Aspartate/glutamate leucyltransferase.